An 82-amino-acid polypeptide reads, in one-letter code: RNA-binding protein Hfq (82 aa).

In terms of domain architecture, Sm spans 10 to 70 (DLFLNTVRKS…ISTIMPSQPV (61 aa)).

It belongs to the Hfq family. Homohexamer.

Its function is as follows. RNA chaperone that binds small regulatory RNA (sRNAs) and mRNAs to facilitate mRNA translational regulation in response to envelope stress, environmental stress and changes in metabolite concentrations. Also binds with high specificity to tRNAs. The chain is RNA-binding protein Hfq from Chelativorans sp. (strain BNC1).